A 412-amino-acid chain; its full sequence is Shaggy-related protein kinase zeta (412 aa).

Residues 1–19 (MTSIPLGPPQPPSLAPQPP) are compositionally biased toward pro residues. The tract at residues 1–33 (MTSIPLGPPQPPSLAPQPPHLHGGDSLKRRPDI) is disordered. Residues 22 to 33 (HGGDSLKRRPDI) show a composition bias toward basic and acidic residues. Ser26 is modified (phosphoserine). The region spanning 72 to 356 (YMAERVVGTG…ALEACAHPFF (285 aa)) is the Protein kinase domain. ATP-binding positions include 78–86 (VGTGSFGIV) and Lys101. At Ser127 the chain carries Phosphoserine. Residues Thr136 and Thr137 each carry the phosphothreonine modification. The active-site Proton acceptor is the Asp197. Residue Ser219 is modified to Phosphoserine. Tyr232 is modified (phosphotyrosine). The residue at position 252 (Ser252) is a Phosphoserine. Thr293 carries the phosphothreonine modification. Ser342 is subject to Phosphoserine. Thr346 carries the phosphothreonine modification.

The protein belongs to the protein kinase superfamily. CMGC Ser/Thr protein kinase family. GSK-3 subfamily. As to quaternary structure, binds to KIB1. Interacts with beet curly top virus AL4/C4 and tomato golden mosaic virus AL4/AC4. Post-translationally, autophosphorylated mainly on threonine and serine residues.

The catalysed reaction is L-seryl-[protein] + ATP = O-phospho-L-seryl-[protein] + ADP + H(+). It catalyses the reaction L-threonyl-[protein] + ATP = O-phospho-L-threonyl-[protein] + ADP + H(+). Functionally, may mediate extracellular signals to regulate transcription in differentiating cells. The protein is Shaggy-related protein kinase zeta (ASK6) of Arabidopsis thaliana (Mouse-ear cress).